The primary structure comprises 348 residues: UPF0283 membrane protein PMI1371 (348 aa).

A run of 2 helical transmembrane segments spans residues 69 to 89 (LITV…GQWI) and 99 to 119 (IALG…GSVI).

The protein belongs to the UPF0283 family.

It is found in the cell inner membrane. This is UPF0283 membrane protein PMI1371 from Proteus mirabilis (strain HI4320).